Reading from the N-terminus, the 173-residue chain is uncharacterized protein (173 aa).

Residues 49-72 are disordered; sequence PTRSGRTSNSGNRGPVMTSTSSIN.

This is an uncharacterized protein from Human adenovirus B serotype 7 (HAdV-7).